Reading from the N-terminus, the 85-residue chain is UPF0291 protein SP_1473 (85 aa).

Residues 62–85 (TPEKLRQVQREKGLHGRSLDDPNS) are disordered.

It belongs to the UPF0291 family.

It is found in the cytoplasm. The chain is UPF0291 protein SP_1473 from Streptococcus pneumoniae serotype 4 (strain ATCC BAA-334 / TIGR4).